We begin with the raw amino-acid sequence, 119 residues long: GGLGGGCGRGFSGGGLPVATASAAPTGLGIASENRYEGTVGVCGNLPFLGTADVAGEFPTAGIGEIDYGCGNGAVGITREGGLGYGAGYGDGYGLGYGGYGGGYGLGYGGYGGCGCGCG.

The segment at 1–11 is left arm; the sequence is GGLGGGCGRGF. Positions 12–80 are central domain; it reads SGGGLPVATA…GNGAVGITRE (69 aa). The interval 81–119 is right arm (Gly-rich tandem repeats); that stretch reads GGLGYGAGYGDGYGLGYGGYGGGYGLGYGGYGGCGCGCG.

Belongs to the chorion protein family.

This protein is one of many from the eggshell of the silk moth. This chain is Chorion class B protein M2807, found in Bombyx mori (Silk moth).